We begin with the raw amino-acid sequence, 167 residues long: MLTVALLALLCASASGNAIQARSSSYSGEYGGGGGKRFSHSGNQLDGPITALRVRVNTYYIVGLQVRYGKVWSDYVGGRNGDLEEIFLHPGESVIQVSGKYKWYLKKLVFVTDKGRYLSFGKDSGTSFNAVPLHPNTVLRFISGRSGSLIDAIGLHWDVYPSSCSRC.

An N-terminal signal peptide occupies residues 1–16 (MLTVALLALLCASASG). Residues 24–159 (SSYSGEYGGG…IDAIGLHWDV (136 aa)) enclose the Jacalin-type lectin domain.

It belongs to the jacalin lectin family. Highly expressed in liver. Detected at lower levels in colon, ileum and jejunum.

Its subcellular location is the secreted. It is found in the extracellular space. The protein resides in the extracellular matrix. It localises to the zymogen granule lumen. The protein localises to the golgi apparatus lumen. Functionally, may play a role in protein trafficking. May act as a linker molecule between the submembranous matrix on the luminal side of zymogen granule membrane (ZGM) and aggregated secretory proteins during granule formation in the TGN. This Homo sapiens (Human) protein is Zymogen granule membrane protein 16 (ZG16).